A 299-amino-acid chain; its full sequence is ATP phosphoribosyltransferase (299 aa).

Belongs to the ATP phosphoribosyltransferase family. Long subfamily. As to quaternary structure, equilibrium between an active dimeric form, an inactive hexameric form and higher aggregates. Interconversion between the various forms is largely reversible and is influenced by the natural substrates and inhibitors of the enzyme. It depends on Mg(2+) as a cofactor.

It localises to the cytoplasm. The enzyme catalyses 1-(5-phospho-beta-D-ribosyl)-ATP + diphosphate = 5-phospho-alpha-D-ribose 1-diphosphate + ATP. It participates in amino-acid biosynthesis; L-histidine biosynthesis; L-histidine from 5-phospho-alpha-D-ribose 1-diphosphate: step 1/9. Its activity is regulated as follows. Feedback inhibited by histidine. Catalyzes the condensation of ATP and 5-phosphoribose 1-diphosphate to form N'-(5'-phosphoribosyl)-ATP (PR-ATP). Has a crucial role in the pathway because the rate of histidine biosynthesis seems to be controlled primarily by regulation of HisG enzymatic activity. This Buchnera aphidicola subsp. Acyrthosiphon pisum (strain 5A) protein is ATP phosphoribosyltransferase.